We begin with the raw amino-acid sequence, 488 residues long: PPE family protein PPE10 (488 aa).

2 disordered regions span residues 207 to 232 (NNNW…NIGS) and 443 to 488 (SDAG…LRTE).

This sequence belongs to the mycobacterial PPE family.

The protein localises to the secreted. Plays a major role in the integrity and stability of the capsule. This Mycobacterium marinum (strain ATCC BAA-535 / M) protein is PPE family protein PPE10.